The primary structure comprises 348 residues: Probable dual-specificity RNA methyltransferase RlmN (348 aa).

E89 (proton acceptor) is an active-site residue. The Radical SAM core domain maps to 95–330 (ERDHYTLCVS…NFVRFSKGVE (236 aa)). Residues C102 and C335 are joined by a disulfide bond. Positions 109, 113, and 116 each coordinate [4Fe-4S] cluster. Residues 157–158 (GE), S189, 214–216 (SLN), and N292 contribute to the S-adenosyl-L-methionine site. C335 functions as the S-methylcysteine intermediate in the catalytic mechanism.

It belongs to the radical SAM superfamily. RlmN family. Requires [4Fe-4S] cluster as cofactor.

Its subcellular location is the cytoplasm. The enzyme catalyses adenosine(2503) in 23S rRNA + 2 reduced [2Fe-2S]-[ferredoxin] + 2 S-adenosyl-L-methionine = 2-methyladenosine(2503) in 23S rRNA + 5'-deoxyadenosine + L-methionine + 2 oxidized [2Fe-2S]-[ferredoxin] + S-adenosyl-L-homocysteine. The catalysed reaction is adenosine(37) in tRNA + 2 reduced [2Fe-2S]-[ferredoxin] + 2 S-adenosyl-L-methionine = 2-methyladenosine(37) in tRNA + 5'-deoxyadenosine + L-methionine + 2 oxidized [2Fe-2S]-[ferredoxin] + S-adenosyl-L-homocysteine. Its function is as follows. Specifically methylates position 2 of adenine 2503 in 23S rRNA and position 2 of adenine 37 in tRNAs. The protein is Probable dual-specificity RNA methyltransferase RlmN of Aquifex aeolicus (strain VF5).